Here is a 329-residue protein sequence, read N- to C-terminus: GMP reductase (329 aa).

Residue Cys-178 is the Thioimidate intermediate of the active site. Position 207-230 (207-230) interacts with NADP(+); sequence VIADGGIRTHGDIAKSIRMGATMV.

Belongs to the IMPDH/GMPR family. GuaC type 2 subfamily.

The catalysed reaction is IMP + NH4(+) + NADP(+) = GMP + NADPH + 2 H(+). Its function is as follows. Catalyzes the irreversible NADPH-dependent deamination of GMP to IMP. It functions in the conversion of nucleobase, nucleoside and nucleotide derivatives of G to A nucleotides, and in maintaining the intracellular balance of A and G nucleotides. This is GMP reductase from Lactococcus lactis subsp. lactis (strain IL1403) (Streptococcus lactis).